A 273-amino-acid polypeptide reads, in one-letter code: MIKWLQRAGCLSAHAVVPQAPAAASVQGRHDLAFDTISNARDLGGLAGAGGRRVRQGRLYRSGNPALASAADLERLQTLGLDMVVDFRSPGEKSPEEAAFGQRFHWVAAPVLEGSMAMDVLMPRLRASTPAQMDAFMLEVYGDFPVRYREAFAGFMRTAQGGKTLLFHCTAGKDRTGFAALLLLAALGVAQDDILANYLESNQRNAQFNQTALARMAGLGVAPAVMTPLLEVRASYLDASMRAIDAGWGSVDNYLRDALEVDVAQLRGHYLAG.

The first 15 residues, M1–A15, serve as a signal peptide directing secretion. The active-site Phosphocysteine intermediate is the C169.

It belongs to the protein-tyrosine phosphatase family.

The enzyme catalyses O-phospho-L-tyrosyl-[protein] + H2O = L-tyrosyl-[protein] + phosphate. The protein is Putative tyrosine-protein phosphatase H16_A0669 of Cupriavidus necator (strain ATCC 17699 / DSM 428 / KCTC 22496 / NCIMB 10442 / H16 / Stanier 337) (Ralstonia eutropha).